Here is a 474-residue protein sequence, read N- to C-terminus: MKLSMPRFDRSPVLVVGDVMLDRYWHGCTTRISPEAPVPVVKVEQMEDRPGGAANVALNIAALGGAATLVGVTGADEAADSLARSLASAGVDVHFQRIASQPTIVKLRVMSRHQQLLRMDFEEPFATDAAALAAEVEGLLAGIRVLVLSDYGKGALKNHQALIQAARARGIAVLADPKGKDFGIYRGADLITPNLAEFENVVGRCADEGELVARGARLMADLELGALLVTRGEHGMTLMRPGHPPLHLPARAREVFDVTGAGDTVISTLAAALAAGEELPQAVALANLAAGIVVGKLGTATISVPELRRAVQREQGSERGVLGLEQLLLAIEDAHAQGEKIVFTNGCFDILHAGHVTYLEQARAQGDRLIVAVNDDASVTRLKGPGRPINTVDRRMAVLAGLGAVDWVISFAEDTPERLLEQIRPDVLVKGGDYGIDQVVGADIVRAHGGEVRVLGLVENSSTTGIVEKIRRQP.

A ribokinase region spans residues 1-317 (MKLSMPRFDR…RRAVQREQGS (317 aa)). Position 194–197 (194–197 (NLAE)) interacts with ATP. Asp263 is a catalytic residue. Residues 343–474 (FTNGCFDILH…GIVEKIRRQP (132 aa)) are cytidylyltransferase.

The protein in the N-terminal section; belongs to the carbohydrate kinase PfkB family. This sequence in the C-terminal section; belongs to the cytidylyltransferase family. As to quaternary structure, homodimer.

The catalysed reaction is D-glycero-beta-D-manno-heptose 7-phosphate + ATP = D-glycero-beta-D-manno-heptose 1,7-bisphosphate + ADP + H(+). The enzyme catalyses D-glycero-beta-D-manno-heptose 1-phosphate + ATP + H(+) = ADP-D-glycero-beta-D-manno-heptose + diphosphate. Its pathway is nucleotide-sugar biosynthesis; ADP-L-glycero-beta-D-manno-heptose biosynthesis; ADP-L-glycero-beta-D-manno-heptose from D-glycero-beta-D-manno-heptose 7-phosphate: step 1/4. It participates in nucleotide-sugar biosynthesis; ADP-L-glycero-beta-D-manno-heptose biosynthesis; ADP-L-glycero-beta-D-manno-heptose from D-glycero-beta-D-manno-heptose 7-phosphate: step 3/4. Its function is as follows. Catalyzes the phosphorylation of D-glycero-D-manno-heptose 7-phosphate at the C-1 position to selectively form D-glycero-beta-D-manno-heptose-1,7-bisphosphate. Catalyzes the ADP transfer from ATP to D-glycero-beta-D-manno-heptose 1-phosphate, yielding ADP-D-glycero-beta-D-manno-heptose. The protein is Bifunctional protein HldE of Azotobacter vinelandii (strain DJ / ATCC BAA-1303).